The chain runs to 474 residues: 3-isopropylmalate dehydratase large subunit (474 aa).

[4Fe-4S] cluster is bound by residues Cys-355, Cys-415, and Cys-418.

It belongs to the aconitase/IPM isomerase family. LeuC type 1 subfamily. As to quaternary structure, heterodimer of LeuC and LeuD. The cofactor is [4Fe-4S] cluster.

The enzyme catalyses (2R,3S)-3-isopropylmalate = (2S)-2-isopropylmalate. Its pathway is amino-acid biosynthesis; L-leucine biosynthesis; L-leucine from 3-methyl-2-oxobutanoate: step 2/4. Its function is as follows. Catalyzes the isomerization between 2-isopropylmalate and 3-isopropylmalate, via the formation of 2-isopropylmaleate. This chain is 3-isopropylmalate dehydratase large subunit, found in Shewanella sp. (strain MR-7).